The chain runs to 317 residues: Ribosomal protein L11 methyltransferase (317 aa).

Residues Thr-158, Gly-179, Asp-201, and Asn-244 each contribute to the S-adenosyl-L-methionine site.

It belongs to the methyltransferase superfamily. PrmA family.

Its subcellular location is the cytoplasm. It carries out the reaction L-lysyl-[protein] + 3 S-adenosyl-L-methionine = N(6),N(6),N(6)-trimethyl-L-lysyl-[protein] + 3 S-adenosyl-L-homocysteine + 3 H(+). Its function is as follows. Methylates ribosomal protein L11. This is Ribosomal protein L11 methyltransferase from Streptococcus mutans serotype c (strain ATCC 700610 / UA159).